The primary structure comprises 593 residues: Aspartate--tRNA ligase (593 aa).

Glu-180 contributes to the L-aspartate binding site. The tract at residues 204 to 207 is aspartate; the sequence is QIFK. Arg-226 is a binding site for L-aspartate. Residues 226–228 and Gln-235 contribute to the ATP site; that span reads RDE. His-453 contributes to the L-aspartate binding site. Glu-487 is an ATP binding site. An L-aspartate-binding site is contributed by Arg-494. An ATP-binding site is contributed by 539–542; sequence GLDR.

Belongs to the class-II aminoacyl-tRNA synthetase family. Type 1 subfamily. As to quaternary structure, homodimer.

Its subcellular location is the cytoplasm. It carries out the reaction tRNA(Asp) + L-aspartate + ATP = L-aspartyl-tRNA(Asp) + AMP + diphosphate. Its function is as follows. Catalyzes the attachment of L-aspartate to tRNA(Asp) in a two-step reaction: L-aspartate is first activated by ATP to form Asp-AMP and then transferred to the acceptor end of tRNA(Asp). The protein is Aspartate--tRNA ligase of Clostridium botulinum (strain 657 / Type Ba4).